The following is a 732-amino-acid chain: E3 ubiquitin-protein ligase TRIM56 (732 aa).

The segment at Cys21–Arg60 adopts an RING-type zinc-finger fold. Residues Arg164–Leu205 form a B box-type zinc finger. Residues Cys169, His172, Cys192, and His197 each coordinate Zn(2+). A coiled-coil region spans residues Ala211–Glu286. Residues Leu374 to Ala384 are compositionally biased toward basic and acidic residues. Residues Leu374–Ser462 form a disordered region. The span at Gly389–Gln405 shows a compositional bias: polar residues. Residue Thr402 is modified to Phosphothreonine. Residues Asp407–Arg416 show a composition bias toward basic and acidic residues. Thr419 carries the post-translational modification Phosphothreonine. Basic residues predominate over residues Ser434–Ser446. Ser452 carries the post-translational modification Phosphoserine.

It belongs to the TRIM/RBCC family. Interacts with STING1. Interacts with TICAM1.

Its subcellular location is the cytoplasm. The catalysed reaction is S-ubiquitinyl-[E2 ubiquitin-conjugating enzyme]-L-cysteine + [acceptor protein]-L-lysine = [E2 ubiquitin-conjugating enzyme]-L-cysteine + N(6)-ubiquitinyl-[acceptor protein]-L-lysine.. It participates in protein modification; protein ubiquitination. In terms of biological role, E3 ubiquitin-protein ligase that plays a key role in innate antiviral immunity by mediating ubiquitination of CGAS and STING1. In response to pathogen- and host-derived double-stranded DNA (dsDNA), targets STING1 to 'Lys-63'-linked ubiquitination, thereby promoting its homodimerization, a step required for the production of type I interferon IFN-beta. Also mediate monoubiquitination of CGAS, thereby promoting CGAS oligomerization and subsequent activation. Independently of its E3 ubiquitin ligase activity, positive regulator of TLR3 signaling. Potentiates extracellular double stranded RNA (dsRNA)-induced expression of IFNB1 and interferon-stimulated genes ISG15, IFIT1/ISG56, CXCL10, OASL and CCL5/RANTES. Restricts bovine viral diarrhea virus (BVDV) replication. The protein is E3 ubiquitin-protein ligase TRIM56 of Bos taurus (Bovine).